The chain runs to 160 residues: RNA pyrophosphohydrolase (160 aa).

Residues 10–154 (PYRKCVGVVL…KRDVYEQVFD (145 aa)) enclose the Nudix hydrolase domain. The Nudix box motif lies at 44-65 (GGIEDGEDARTAALRELVEETG).

It belongs to the Nudix hydrolase family. RppH subfamily. It depends on a divalent metal cation as a cofactor.

In terms of biological role, accelerates the degradation of transcripts by removing pyrophosphate from the 5'-end of triphosphorylated RNA, leading to a more labile monophosphorylated state that can stimulate subsequent ribonuclease cleavage. The protein is RNA pyrophosphohydrolase of Dinoroseobacter shibae (strain DSM 16493 / NCIMB 14021 / DFL 12).